A 591-amino-acid polypeptide reads, in one-letter code: MAERTHACGKVTVEAVGQTVQLKGWVQKRRDLGGLIFIDLRDRTGIVQVVFNPETSKEALEVAETIRSEYVLHVEGTVVERGEGAINDNMATGRIEVQATKVNVLNAAKTTPIIIADDTDASEDVRLKYRYLDLRRPVMFNTFKMRHDVTKTIRNFLDTEEFLEVETPILTKSTPEGARDYLVPSRVHDGEFYALPQSPQLFKQLLMVGGFERYYQVARCFRDEDLRADRQPEFTQIDIEASFLTQDEILDMMERMMTKVMKDAKGVEVSAPFPRMKYADAMARYGSDKPDTRFEMELTDLSEFAAGCGFKVFTSAVESGGQVKAINAKGAASKYSRKDIDALTEFVKVYGAKGLAWLKVEEDGLKGPIAKFFGEEDANVLMSTLEATAGDLLLFVADKKSVVADSLGALRLRLGKELELIDESKFNFLWVTDWPLLEYDEDADRYFAAHHPFTMPFREDVELLETAPEKARAQAYDLVLNGYELGGGSLRIYERDVQEKMFKALGFSQEEAQEQFGFLLEAFEYGTPPHGGIALGLDRLVMLLAGRTNLRDTIAFPKTASASCLLTEAPSPVAEAQLEELNLKLSLKEEK.

Residue Glu-176 coordinates L-aspartate. An aspartate region spans residues 200–203 (QLFK). An L-aspartate-binding site is contributed by Arg-222. Residues 222–224 (RDE) and Gln-231 contribute to the ATP site. His-450 contacts L-aspartate. Glu-484 is a binding site for ATP. Arg-491 contacts L-aspartate. 536–539 (GLDR) lines the ATP pocket.

It belongs to the class-II aminoacyl-tRNA synthetase family. Type 1 subfamily. In terms of assembly, homodimer.

Its subcellular location is the cytoplasm. The catalysed reaction is tRNA(Asx) + L-aspartate + ATP = L-aspartyl-tRNA(Asx) + AMP + diphosphate. Its function is as follows. Aspartyl-tRNA synthetase with relaxed tRNA specificity since it is able to aspartylate not only its cognate tRNA(Asp) but also tRNA(Asn). Reaction proceeds in two steps: L-aspartate is first activated by ATP to form Asp-AMP and then transferred to the acceptor end of tRNA(Asp/Asn). The chain is Aspartate--tRNA(Asp/Asn) ligase from Bacillus cereus (strain B4264).